The sequence spans 403 residues: Probable eukaryotic initiation factor 4A (403 aa).

The interval M1–D29 is disordered. Residues P26–Q54 carry the Q motif motif. The Helicase ATP-binding domain maps to I57–I230. A70–T77 serves as a coordination point for ATP. The short motif at D178 to D181 is the DEAD box element. The Helicase C-terminal domain maps to G241–L401.

The protein belongs to the DEAD box helicase family. eIF4A subfamily. EIF4F is a multi-subunit complex, the composition of which varies with external and internal environmental conditions. It is composed of at least EIF4A, EIF4E and EIF4G.

The enzyme catalyses ATP + H2O = ADP + phosphate + H(+). Its function is as follows. ATP-dependent RNA helicase which is a subunit of the eIF4F complex involved in cap recognition and is required for mRNA binding to ribosome. In the current model of translation initiation, eIF4A unwinds RNA secondary structures in the 5'-UTR of mRNAs which is necessary to allow efficient binding of the small ribosomal subunit, and subsequent scanning for the initiator codon. In Leishmania braziliensis, this protein is Probable eukaryotic initiation factor 4A.